A 218-amino-acid chain; its full sequence is Cytochrome b6 (218 aa).

A helical membrane pass occupies residues 35–55 (IFYCLGGITLVCFLIQFATGF). Position 38 (C38) interacts with heme c. Heme b contacts are provided by H89 and H103. A run of 3 helical transmembrane segments spans residues 93-113 (ASMM…TGGF), 119-139 (LTWV…VTGY), and 189-209 (LHTF…FLMI). Positions 190 and 205 each coordinate heme b.

Belongs to the cytochrome b family. PetB subfamily. As to quaternary structure, the 4 large subunits of the cytochrome b6-f complex are cytochrome b6, subunit IV (17 kDa polypeptide, PetD), cytochrome f and the Rieske protein, while the 4 small subunits are PetG, PetL, PetM and PetN. The complex functions as a dimer. Heme b is required as a cofactor. It depends on heme c as a cofactor.

Its subcellular location is the cellular thylakoid membrane. Functionally, component of the cytochrome b6-f complex, which mediates electron transfer between photosystem II (PSII) and photosystem I (PSI), cyclic electron flow around PSI, and state transitions. The protein is Cytochrome b6 of Prochlorococcus marinus (strain MIT 9515).